Here is a 130-residue protein sequence, read N- to C-terminus: Follitropin subunit beta (130 aa).

The signal sequence occupies residues 1–20 (MMKLIQLCILFWCWRAICCH). 6 disulfide bridges follow: Cys-22–Cys-70, Cys-36–Cys-85, Cys-39–Cys-123, Cys-47–Cys-101, Cys-51–Cys-103, and Cys-106–Cys-113. N-linked (GlcNAc...) asparagine glycans are attached at residues Asn-26 and Asn-43.

It belongs to the glycoprotein hormones subunit beta family. In terms of assembly, heterodimer. The active follitropin is a heterodimer composed of an alpha chain/CGA shared with other hormones and a unique beta chain/FSHB shown here.

The protein localises to the secreted. In terms of biological role, together with the alpha chain CGA constitutes follitropin, the follicle-stimulating hormone, and provides its biological specificity to the hormone heterodimer. Binds FSHR, a G protein-coupled receptor, on target cells to activate downstream signaling pathways. Follitropin is involved in follicle development and spermatogenesis in reproductive organs. In Mus musculus (Mouse), this protein is Follitropin subunit beta (Fshb).